The chain runs to 307 residues: Ribonuclease Z (307 aa).

Zn(2+)-binding residues include His-61, His-63, Asp-65, His-66, His-138, Asp-207, and His-265. The Proton acceptor role is filled by Asp-65.

This sequence belongs to the RNase Z family. As to quaternary structure, homodimer. Zn(2+) is required as a cofactor.

It carries out the reaction Endonucleolytic cleavage of RNA, removing extra 3' nucleotides from tRNA precursor, generating 3' termini of tRNAs. A 3'-hydroxy group is left at the tRNA terminus and a 5'-phosphoryl group is left at the trailer molecule.. Zinc phosphodiesterase, which displays some tRNA 3'-processing endonuclease activity. Probably involved in tRNA maturation, by removing a 3'-trailer from precursor tRNA. The sequence is that of Ribonuclease Z from Methanothermobacter thermautotrophicus (strain ATCC 29096 / DSM 1053 / JCM 10044 / NBRC 100330 / Delta H) (Methanobacterium thermoautotrophicum).